The following is a 261-amino-acid chain: MKVQQEAVNVLERTSAYLKSGILKKTPAWYNVIAKVPPTKKFARTPQLTHPMNGKSRTALPDYSNWKANSSGLYKTRPNSLEKKDGASKLYQSPKLVYIEDKLRKLFFQQHPWELSRPKILVENTLETQEYDWSHIQQLGKPLDGESVVQRTLFLLKSGEKKELIDAYDQARFEFYRLRIQQEIQDQVAQEEAEMFGSVFHTTSIEYGIAKEQKVIDTWKRKALQQAELMAARASSPSASWTNETEEEQKPIDQDVEEIQL.

Residues 233–261 are disordered; the sequence is RASSPSASWTNETEEEQKPIDQDVEEIQL.

It belongs to the mitochondrion-specific ribosomal protein mS23 family. As to quaternary structure, component of the mitochondrial small ribosomal subunit.

Its subcellular location is the mitochondrion. The polypeptide is Small ribosomal subunit protein mS23 (RSM25) (Kluyveromyces lactis (strain ATCC 8585 / CBS 2359 / DSM 70799 / NBRC 1267 / NRRL Y-1140 / WM37) (Yeast)).